A 424-amino-acid polypeptide reads, in one-letter code: Zinc finger and BTB domain-containing protein 6 (424 aa).

Residues 33 to 97 (CDVSIYINDT…CYTGALEVKR (65 aa)) form the BTB domain. Position 202 is a phosphoserine (Ser-202). 4 C2H2-type zinc fingers span residues 301 to 323 (HQCP…LKMH), 326 to 348 (FLCL…IRGH), 354 to 376 (FQCT…LNIH), and 382 to 405 (YKCH…TSVH). The disordered stretch occupies residues 402-424 (TSVHGRSSGEKLSRPDLKRQSLL). Basic and acidic residues predominate over residues 408–424 (SSGEKLSRPDLKRQSLL).

Widely expressed with highest levels in brain.

The protein resides in the nucleus. May be involved in transcriptional regulation. The chain is Zinc finger and BTB domain-containing protein 6 (ZBTB6) from Homo sapiens (Human).